Here is a 309-residue protein sequence, read N- to C-terminus: ATP synthase gamma chain (309 aa).

The protein belongs to the ATPase gamma chain family. As to quaternary structure, F-type ATPases have 2 components, CF(1) - the catalytic core - and CF(0) - the membrane proton channel. CF(1) has five subunits: alpha(3), beta(3), gamma(1), delta(1), epsilon(1). CF(0) has three main subunits: a, b and c.

Its subcellular location is the cell membrane. Functionally, produces ATP from ADP in the presence of a proton gradient across the membrane. The gamma chain is believed to be important in regulating ATPase activity and the flow of protons through the CF(0) complex. The sequence is that of ATP synthase gamma chain from Ligilactobacillus salivarius (strain UCC118) (Lactobacillus salivarius).